Here is a 747-residue protein sequence, read N- to C-terminus: Probable copper-transporting ATPase PacS (747 aa).

Residues 1 to 101 lie on the Cytoplasmic side of the membrane; it reads MVNQQTLTLR…RQLAQRVWVS (101 aa). Positions 3 to 69 constitute an HMA domain; it reads NQQTLTLRGM…AIEAAGYHAF (67 aa). Cys-14 and Cys-17 together coordinate a metal cation. The helical transmembrane segment at 102–122 threads the bilayer; that stretch reads GLIASLLVIGSLPMMLGISIP. Topologically, residues 123 to 132 are extracellular; the sequence is GIPMWLHHPG. The helical transmembrane segment at 133-151 threads the bilayer; that stretch reads LQLGLTLPVLWAGRSFFIN. The Cytoplasmic portion of the chain corresponds to 152–158; it reads AWKAFRQ. Residues 159-179 traverse the membrane as a helical segment; sequence NTATMDTLVAVGTGAAFLYSL. Topologically, residues 180 to 199 are extracellular; that stretch reads AVTLFPQWLTRQGLPPDVYY. Residues 200-220 traverse the membrane as a helical segment; that stretch reads EAIAVIIALLLLGRSLEERAK. The Cytoplasmic portion of the chain corresponds to 221–348; sequence GQTSAAIRQL…KAPIQRLADQ (128 aa). Residues 349–371 form a helical membrane-spanning segment; it reads VTGWFVPAVIAIAILTFVLWFNW. Residues 372–378 lie on the Extracellular side of the membrane; the sequence is IGNVTLA. Residues 379–396 traverse the membrane as a helical segment; that stretch reads LITAVGVLIIACPCALGL. The Cytoplasmic segment spans residues 397–688; sequence ATPTSIMVGT…QLSRATMTNI (292 aa). Asp-434 acts as the 4-aspartylphosphate intermediate in catalysis. 2 residues coordinate Mg(2+): Asp-634 and Asp-638. The helical transmembrane segment at 689–708 threads the bilayer; the sequence is RQNLFFAFIYNVAGIPIAAG. The Extracellular segment spans residues 709–720; it reads ILYPLLGWLLSP. The helical transmembrane segment at 721–739 threads the bilayer; it reads MLAGAAMAFSSVSVVTNAL. The Cytoplasmic portion of the chain corresponds to 740 to 747; the sequence is RLRQFQPR.

The protein belongs to the cation transport ATPase (P-type) (TC 3.A.3) family. Type IB subfamily.

It localises to the cell membrane. The enzyme catalyses Cu(+)(in) + ATP + H2O = Cu(+)(out) + ADP + phosphate + H(+). May play a role in the osmotic adaptation. This chain is Probable copper-transporting ATPase PacS (pacS), found in Synechococcus elongatus (strain ATCC 33912 / PCC 7942 / FACHB-805) (Anacystis nidulans R2).